The primary structure comprises 346 residues: UDP-3-O-acylglucosamine N-acyltransferase (346 aa).

Catalysis depends on H240, which acts as the Proton acceptor.

This sequence belongs to the transferase hexapeptide repeat family. LpxD subfamily. As to quaternary structure, homotrimer.

The catalysed reaction is a UDP-3-O-[(3R)-3-hydroxyacyl]-alpha-D-glucosamine + a (3R)-hydroxyacyl-[ACP] = a UDP-2-N,3-O-bis[(3R)-3-hydroxyacyl]-alpha-D-glucosamine + holo-[ACP] + H(+). The protein operates within bacterial outer membrane biogenesis; LPS lipid A biosynthesis. Functionally, catalyzes the N-acylation of UDP-3-O-acylglucosamine using 3-hydroxyacyl-ACP as the acyl donor. Is involved in the biosynthesis of lipid A, a phosphorylated glycolipid that anchors the lipopolysaccharide to the outer membrane of the cell. The protein is UDP-3-O-acylglucosamine N-acyltransferase of Bacteroides fragilis (strain ATCC 25285 / DSM 2151 / CCUG 4856 / JCM 11019 / LMG 10263 / NCTC 9343 / Onslow / VPI 2553 / EN-2).